Here is a 298-residue protein sequence, read N- to C-terminus: Acidic endochitinase (298 aa).

Positions 1–29 (MKPNMACLKQVSALLLPLLFISFFKPSHA) are cleaved as a signal peptide. The GH18 domain maps to 30–298 (GGISVYWGQN…GYSGAIIGSV (269 aa)). 2 disulfide bridges follow: Cys49/Cys96 and Cys79/Cys86. The active-site Proton donor is Glu156. A disulfide bridge links Cys185 with Cys214.

The protein belongs to the glycosyl hydrolase 18 family. Chitinase class II subfamily.

The protein resides in the secreted. The protein localises to the extracellular space. The catalysed reaction is Random endo-hydrolysis of N-acetyl-beta-D-glucosaminide (1-&gt;4)-beta-linkages in chitin and chitodextrins.. Functionally, this protein functions as a defense against chitin containing fungal pathogens. The protein is Acidic endochitinase of Phaseolus angularis (Azuki bean).